The primary structure comprises 131 residues: Auxin-responsive protein SAUR77 (131 aa).

Belongs to the ARG7 family.

Functionally, may be involved in the regulation of ethylene receptor signaling. Promotes cell expansion and plant growth. In Arabidopsis thaliana (Mouse-ear cress), this protein is Auxin-responsive protein SAUR77.